Consider the following 131-residue polypeptide: Agouti-related protein (131 aa).

An N-terminal signal peptide occupies residues 1–20 (MLTAMLLSCVLLLALPPTLG). A propeptide spanning residues 21–81 (VQMGVAPLKG…VLDPQNRESR (61 aa)) is cleaved from the precursor. Cystine bridges form between Cys86–Cys101, Cys93–Cys107, Cys100–Cys118, Cys104–Cys128, and Cys109–Cys116. An Agouti domain is found at 86–128 (CVRLHESCLGQQVPCCDPCATCYCRFFNAFCYCRKLGTATNLC). Positions 110-112 (RFF) are interaction with melanocortin receptors.

As to quaternary structure, interacts with melanocortin receptors MC3R, MC4R and MC5R. In terms of tissue distribution, expressed in arcuate nucleus and median eminence, adrenal gland (medulla), hypothalamus, testis, and lung.

Its subcellular location is the secreted. It is found in the golgi apparatus lumen. Its function is as follows. Plays a role in weight homeostasis. Involved in the control of feeding behavior through the central melanocortin system. Acts as alpha melanocyte-stimulating hormone antagonist by inhibiting cAMP production mediated by stimulation of melanocortin receptors within the hypothalamus and adrenal gland. Has very low activity with MC5R. Is an inverse agonist for MC3R and MC4R being able to suppress their constitutive activity. It promotes MC3R and MC4R endocytosis in an arrestin-dependent manner. This is Agouti-related protein (Agrp) from Mus musculus (Mouse).